The sequence spans 154 residues: 17.8 kDa class I heat shock protein (154 aa).

The region spanning 40 to 154 (ESSAFANTRI…PEVKSIEISG (115 aa)) is the sHSP domain.

Belongs to the small heat shock protein (HSP20) family. As to quaternary structure, forms oligomeric structures.

Its subcellular location is the cytoplasm. This Solanum lycopersicum (Tomato) protein is 17.8 kDa class I heat shock protein.